We begin with the raw amino-acid sequence, 335 residues long: Ketol-acid reductoisomerase (NADP(+)) (335 aa).

A KARI N-terminal Rossmann domain is found at 5–185 (SKIYTDKDSN…GATRAGVIPT (181 aa)). Residues 28-31 (YGSQ), Ser56, and 86-89 (DMVQ) each bind NADP(+). His111 is an active-site residue. Gly137 contacts NADP(+). In terms of domain architecture, KARI C-terminal knotted spans 186–331 (TFKEETETDL…NQLKDLIQKG (146 aa)). Mg(2+) contacts are provided by Asp194, Glu198, Glu230, and Glu234. Ser255 is a binding site for substrate.

Belongs to the ketol-acid reductoisomerase family. Requires Mg(2+) as cofactor.

The catalysed reaction is (2R)-2,3-dihydroxy-3-methylbutanoate + NADP(+) = (2S)-2-acetolactate + NADPH + H(+). The enzyme catalyses (2R,3R)-2,3-dihydroxy-3-methylpentanoate + NADP(+) = (S)-2-ethyl-2-hydroxy-3-oxobutanoate + NADPH + H(+). It functions in the pathway amino-acid biosynthesis; L-isoleucine biosynthesis; L-isoleucine from 2-oxobutanoate: step 2/4. Its pathway is amino-acid biosynthesis; L-valine biosynthesis; L-valine from pyruvate: step 2/4. Involved in the biosynthesis of branched-chain amino acids (BCAA). Catalyzes an alkyl-migration followed by a ketol-acid reduction of (S)-2-acetolactate (S2AL) to yield (R)-2,3-dihydroxy-isovalerate. In the isomerase reaction, S2AL is rearranged via a Mg-dependent methyl migration to produce 3-hydroxy-3-methyl-2-ketobutyrate (HMKB). In the reductase reaction, this 2-ketoacid undergoes a metal-dependent reduction by NADPH to yield (R)-2,3-dihydroxy-isovalerate. The protein is Ketol-acid reductoisomerase (NADP(+)) of Saccharolobus islandicus (strain M.16.27) (Sulfolobus islandicus).